The sequence spans 485 residues: UDP-N-acetylmuramate--L-alanine ligase (485 aa).

ATP is bound at residue 120–126 (GSHGKTT).

This sequence belongs to the MurCDEF family.

The protein resides in the cytoplasm. It catalyses the reaction UDP-N-acetyl-alpha-D-muramate + L-alanine + ATP = UDP-N-acetyl-alpha-D-muramoyl-L-alanine + ADP + phosphate + H(+). Its pathway is cell wall biogenesis; peptidoglycan biosynthesis. In terms of biological role, cell wall formation. This chain is UDP-N-acetylmuramate--L-alanine ligase, found in Rickettsia peacockii (strain Rustic).